The following is a 504-amino-acid chain: Cytochrome P450 71B4 (504 aa).

Residues 1-21 (MVSLLSFFLLLLVPIFFLLIF) traverse the membrane as a helical segment. Cys-446 is a binding site for heme.

The protein belongs to the cytochrome P450 family. Requires heme as cofactor.

The protein resides in the membrane. The polypeptide is Cytochrome P450 71B4 (CYP71B4) (Arabidopsis thaliana (Mouse-ear cress)).